Consider the following 182-residue polypeptide: Ribosome-recycling factor (182 aa).

This sequence belongs to the RRF family.

Its subcellular location is the cytoplasm. Responsible for the release of ribosomes from messenger RNA at the termination of protein biosynthesis. May increase the efficiency of translation by recycling ribosomes from one round of translation to another. The polypeptide is Ribosome-recycling factor (Picosynechococcus sp. (strain ATCC 27264 / PCC 7002 / PR-6) (Agmenellum quadruplicatum)).